The following is a 55-amino-acid chain: Large ribosomal subunit protein eL37 (55 aa).

4 residues coordinate Zn(2+): cysteine 20, cysteine 23, cysteine 35, and cysteine 38. The segment at 20–38 (CRRCGKNSYHKRHHRCSSC) adopts a C4-type zinc-finger fold.

The protein belongs to the eukaryotic ribosomal protein eL37 family. Zn(2+) serves as cofactor.

In terms of biological role, binds to the 23S rRNA. The chain is Large ribosomal subunit protein eL37 from Cenarchaeum symbiosum (strain A).